The primary structure comprises 311 residues: Ribosomal RNA small subunit methyltransferase H (311 aa).

Residues 33–35 (GGH), aspartate 53, phenylalanine 77, aspartate 98, and glutamine 105 contribute to the S-adenosyl-L-methionine site.

It belongs to the methyltransferase superfamily. RsmH family.

Its subcellular location is the cytoplasm. It carries out the reaction cytidine(1402) in 16S rRNA + S-adenosyl-L-methionine = N(4)-methylcytidine(1402) in 16S rRNA + S-adenosyl-L-homocysteine + H(+). Its function is as follows. Specifically methylates the N4 position of cytidine in position 1402 (C1402) of 16S rRNA. This Thiobacillus denitrificans (strain ATCC 25259 / T1) protein is Ribosomal RNA small subunit methyltransferase H.